Here is a 113-residue protein sequence, read N- to C-terminus: Type III endosome membrane protein TEMP (113 aa).

A disordered region spans residues 1–22 (MNETNKTLVGPSELPTASAVAP). Residues 1–29 (MNETNKTLVGPSELPTASAVAPGPGTGAR) lie on the Extracellular side of the membrane. The N-linked (GlcNAc...) asparagine glycan is linked to Asn5. A helical; Signal-anchor for type III membrane protein transmembrane segment spans residues 30–50 (AWPVLVGFVLGAVVLSLLIAL). At 51–113 (AAKCHLCRRY…TEGSRDHFSL (63 aa)) the chain is on the cytoplasmic side. The segment at 66 to 113 (HRPLPETGRGGRPQVAEDEDDDGFIEDNYIQPGTGELGTEGSRDHFSL) is disordered. Over residues 81–90 (AEDEDDDGFI) the composition is skewed to acidic residues.

It localises to the membrane. The protein localises to the early endosome. It is found in the recycling endosome. Its subcellular location is the cell membrane. Functionally, may be involved in membrane trafficking between endosomes and plasma membrane. The protein is Type III endosome membrane protein TEMP (C1orf210) of Homo sapiens (Human).